We begin with the raw amino-acid sequence, 491 residues long: Zinc finger and SCAN domain-containing protein 22 (491 aa).

Phosphoserine is present on S9. Positions R49–L131 constitute an SCAN box domain. Disordered regions lie at residues R134–T161 and F204–D249. Residues V214–G224 show a composition bias toward basic and acidic residues. Residues A225–K241 are compositionally biased toward polar residues. 8 consecutive C2H2-type zinc fingers follow at residues S268–H290, Y296–H318, H324–H346, Y352–H374, Y380–H402, Y408–H430, Y436–H458, and Y464–H486. K443 participates in a covalent cross-link: Glycyl lysine isopeptide (Lys-Gly) (interchain with G-Cter in SUMO2).

The protein belongs to the krueppel C2H2-type zinc-finger protein family.

The protein resides in the nucleus. Its function is as follows. May be involved in transcriptional regulation. This Homo sapiens (Human) protein is Zinc finger and SCAN domain-containing protein 22 (ZSCAN22).